A 206-amino-acid chain; its full sequence is Small ribosomal subunit protein uS4 (206 aa).

One can recognise an S4 RNA-binding domain in the interval 96–160; that stretch reads CRLDNVVYRM…AQLRIVQALE (65 aa).

It belongs to the universal ribosomal protein uS4 family. In terms of assembly, part of the 30S ribosomal subunit. Contacts protein S5. The interaction surface between S4 and S5 is involved in control of translational fidelity.

Its function is as follows. One of the primary rRNA binding proteins, it binds directly to 16S rRNA where it nucleates assembly of the body of the 30S subunit. Functionally, with S5 and S12 plays an important role in translational accuracy. This Pseudomonas putida (strain GB-1) protein is Small ribosomal subunit protein uS4.